Here is a 208-residue protein sequence, read N- to C-terminus: MTPGKFITLEGGEGVGKSTNVDFVVSRLRARGLKVVATREPGGTAFGEAVREIFLRQDTVRPEAELLLLFAARVHHLREVIEPALRRGDWVVCDRFTDASYAYQGAGRGIAPGVIDFLRDWIQAGLRPDLTLLLDAPVDTGLKRAHQRSGPDRLEREDSAFFARVREGYLALARAEPGRIRVIDADRPLALVQTAIATQVDSLLAGHV.

An ATP-binding site is contributed by 11-18; that stretch reads GGEGVGKS.

The protein belongs to the thymidylate kinase family.

It carries out the reaction dTMP + ATP = dTDP + ADP. Its function is as follows. Phosphorylation of dTMP to form dTDP in both de novo and salvage pathways of dTTP synthesis. This chain is Thymidylate kinase, found in Methylococcus capsulatus (strain ATCC 33009 / NCIMB 11132 / Bath).